Consider the following 594-residue polypeptide: Transcription factor TFIIIB component B'' (594 aa).

The disordered stretch occupies residues 1–169 (MSSIVNKSGT…ARRLSTISNK (169 aa)). A Phosphoserine modification is found at serine 49. Over residues 150 to 168 (LDSSSNSNGTARRLSTISN) the composition is skewed to polar residues. Serine 178 bears the Phosphoserine mark. 2 disordered regions span residues 217-245 (SPPT…DENE) and 317-343 (ARQE…KEER). Basic and acidic residues-rich tracts occupy residues 225 to 241 (SLDR…SREA) and 317 to 330 (ARQE…LTKE). One can recognise an SANT domain in the interval 415–466 (SYTDPWTVEEMIKFYKALSMWGTDFNLISQLYPYRSRKQVKAKFVNEEKKRP). Positions 520–529 (KNTAKEEDQT) are enriched in basic and acidic residues. 2 disordered regions span residues 520–547 (KNTA…GGIM) and 567–594 (LKRK…EIDQ). Residues 579–594 (DNEDNEGSEEEPEIDQ) are compositionally biased toward acidic residues.

Belongs to the TFC5 family. In terms of assembly, TFIIIB comprises the TATA-binding protein (TBP), the B-related factor (BRF) and the B'' component (BDP1). Interacts with TFC4.

The protein localises to the nucleus. Functionally, general activator of RNA polymerase III transcription. This Saccharomyces cerevisiae (strain ATCC 204508 / S288c) (Baker's yeast) protein is Transcription factor TFIIIB component B'' (BDP1).